We begin with the raw amino-acid sequence, 476 residues long: CDK5 and ABL1 enzyme substrate 2 (476 aa).

The segment at methionine 1–arginine 119 is disordered. Positions proline 30 to glutamine 40 are enriched in basic residues. Residues proline 65 to proline 96 show a composition bias toward pro residues. 2 positions are modified to phosphoserine: serine 128 and serine 206. The disordered stretch occupies residues aspartate 256–glycine 295. Over residues glutamine 263–proline 272 the composition is skewed to pro residues.

The protein belongs to the cyclin family. In terms of assembly, binds to CDK3, CDK5 and ABL1. The C-terminal cyclin-box-like region binds to CDK5. As to expression, widely expressed.

Unknown. Probably involved in G1-S cell cycle transition. This is CDK5 and ABL1 enzyme substrate 2 (Cables2) from Mus musculus (Mouse).